We begin with the raw amino-acid sequence, 180 residues long: Negative modulator of initiation of replication (180 aa).

3 interaction with DNA regions span residues 86-87 (AV), 115-119 (RTRVY), and 149-155 (NTNTGRK).

This sequence belongs to the SeqA family. In terms of assembly, homodimer. Polymerizes to form helical filaments.

It localises to the cytoplasm. Negative regulator of replication initiation, which contributes to regulation of DNA replication and ensures that replication initiation occurs exactly once per chromosome per cell cycle. Binds to pairs of hemimethylated GATC sequences in the oriC region, thus preventing assembly of replication proteins and re-initiation at newly replicated origins. Repression is relieved when the region becomes fully methylated. The polypeptide is Negative modulator of initiation of replication (Enterobacter sp. (strain 638)).